The chain runs to 152 residues: Large ribosomal subunit protein bL9 (152 aa).

This sequence belongs to the bacterial ribosomal protein bL9 family.

In terms of biological role, binds to the 23S rRNA. The sequence is that of Large ribosomal subunit protein bL9 from Pelagibacter ubique (strain HTCC1062).